Consider the following 544-residue polypeptide: FVLNYLNTTTIAFISLISLLFFLFRFSKVSHTKEPPIISGSWPLLGHLPLMRNTQTPHKTLGALVDKYGPIFTIKLGATNALVLSNWELAKECFTKNDIVVSSRPKPVAVELMSYNQAFIGWAPYGAYWRQLRKIVTLEILSNRRIELLSHIRVSEVQTSIKELVNVWSNQISSQYGLLDDTKSSSTNDEPSTTDYVSVELKKWFAQLTLNMVLRMVVGKRCFGDVDVENKEEAKRFLENIRDFMRLIGTFTVGDGVPFLKWLDLGGHEKEMKKCAKKFDVMLNEWLEEHREKKGLGSEDKVVGERDFMDAMLLVLKDKPIEGFDVDTIIKATTLELILGGSDTTAGTLTWAMCLLLKHPHVLEKLKEELNTYIGKERCVNESDINKLVYLHAIIKETLRLYPPAPFSSPREFTEDCTIGGYHIKKGTRLMPNLWKIHRDPSVWPDPLEFKPERFLSTHKDVDVRGQNFELLPFGSGRRMCAGMSLGLHMVHYILANFLHSFEILNPSPESIDVTEVLEFVTTKATPLEVLVKPCLSFKCYESM.

Cys481 is a binding site for heme.

Belongs to the cytochrome P450 family. Heme is required as a cofactor.

Its subcellular location is the membrane. The sequence is that of Cytochrome P450 82A1 (CYP82A1) from Pisum sativum (Garden pea).